A 403-amino-acid polypeptide reads, in one-letter code: Octaketide synthase 1 (403 aa).

Residue C174 is part of the active site. CoA-binding positions include S281 and 318–321 (GGRA).

Belongs to the thiolase-like superfamily. Chalcone/stilbene synthases family. Homodimer.

The protein operates within secondary metabolite biosynthesis; flavonoid biosynthesis. In terms of biological role, catalyzes the iterative condensations of 8 molecules of malonyl-CoA to produce aromatic octaketides, SEK4 and SEK4b, the products of the minimal polyketide synthase for the benzoisochromanequinone actinorhodin. May be involved in the biosynthesis of the octaketide barbaloin. The chain is Octaketide synthase 1 from Aloe arborescens (Kidachi aloe).